A 163-amino-acid chain; its full sequence is 2-C-methyl-D-erythritol 2,4-cyclodiphosphate synthase (163 aa).

Residues Asp-11 and His-13 each contribute to the a divalent metal cation site. 4-CDP-2-C-methyl-D-erythritol 2-phosphate is bound by residues 11-13 (DIH) and 37-38 (HS). Position 45 (His-45) interacts with a divalent metal cation. 4-CDP-2-C-methyl-D-erythritol 2-phosphate-binding positions include 59-61 (DIG), 64-68 (FSDTD), 103-109 (AQVPKMA), and Arg-145.

Belongs to the IspF family. Homotrimer. A divalent metal cation is required as a cofactor.

The enzyme catalyses 4-CDP-2-C-methyl-D-erythritol 2-phosphate = 2-C-methyl-D-erythritol 2,4-cyclic diphosphate + CMP. It functions in the pathway isoprenoid biosynthesis; isopentenyl diphosphate biosynthesis via DXP pathway; isopentenyl diphosphate from 1-deoxy-D-xylulose 5-phosphate: step 4/6. In terms of biological role, involved in the biosynthesis of isopentenyl diphosphate (IPP) and dimethylallyl diphosphate (DMAPP), two major building blocks of isoprenoid compounds. Catalyzes the conversion of 4-diphosphocytidyl-2-C-methyl-D-erythritol 2-phosphate (CDP-ME2P) to 2-C-methyl-D-erythritol 2,4-cyclodiphosphate (ME-CPP) with a corresponding release of cytidine 5-monophosphate (CMP). The protein is 2-C-methyl-D-erythritol 2,4-cyclodiphosphate synthase of Nitrosomonas europaea (strain ATCC 19718 / CIP 103999 / KCTC 2705 / NBRC 14298).